The primary structure comprises 960 residues: Endosome/lysosome-associated apoptosis and autophagy regulator family member 2 (960 aa).

The segment at 1–26 is disordered; that stretch reads MLFLRPGPARGRGRGRPARAPHSGLS. Residues 1–44 form the signal peptide; that stretch reads MLFLRPGPARGRGRGRPARAPHSGLSPPWSPAWICCWALAGCQA. At 45–860 the chain is on the extracellular side; that stretch reads AWAGAGDLPS…TCETVDFWLK (816 aa). N-linked (GlcNAc...) asparagine glycosylation is present at Asn-171. Cystine bridges form between Cys-295/Cys-312, Cys-325/Cys-348, and Cys-328/Cys-360. Residues Asn-407 and Asn-622 are each glycosylated (N-linked (GlcNAc...) asparagine). Residues 597–808 form the MRH domain; it reads PTCPYIRSMA…LWESVEACPL (212 aa). 4 disulfide bridges follow: Cys-599–Cys-651, Cys-661–Cys-689, Cys-758–Cys-794, and Cys-770–Cys-806. A helical membrane pass occupies residues 861–881; it reads VGAGVGAFTAVLLVALTCYFW. The Cytoplasmic segment spans residues 882-960; it reads KKNQKLEYKY…QLKSSRSPNI (79 aa). Ser-949 carries the post-translational modification Phosphoserine.

This sequence belongs to the ELAPOR family.

It is found in the cell membrane. Its function is as follows. Functions as a regulator of the BMP signaling pathway and may be involved in epidermal differentiation. This is Endosome/lysosome-associated apoptosis and autophagy regulator family member 2 from Bos taurus (Bovine).